The sequence spans 144 residues: uncharacterized protein (144 aa).

This is an uncharacterized protein from Methanocaldococcus jannaschii (strain ATCC 43067 / DSM 2661 / JAL-1 / JCM 10045 / NBRC 100440) (Methanococcus jannaschii).